The sequence spans 704 residues: Elongation factor G (704 aa).

Residues 8–290 (ARYRNIGISA…AVIEYLPAPT (283 aa)) form the tr-type G domain. Residues 17–24 (AHIDAGKT), 88–92 (DTPGH), and 142–145 (NKMD) contribute to the GTP site.

This sequence belongs to the TRAFAC class translation factor GTPase superfamily. Classic translation factor GTPase family. EF-G/EF-2 subfamily.

Its subcellular location is the cytoplasm. Catalyzes the GTP-dependent ribosomal translocation step during translation elongation. During this step, the ribosome changes from the pre-translocational (PRE) to the post-translocational (POST) state as the newly formed A-site-bound peptidyl-tRNA and P-site-bound deacylated tRNA move to the P and E sites, respectively. Catalyzes the coordinated movement of the two tRNA molecules, the mRNA and conformational changes in the ribosome. The chain is Elongation factor G from Proteus mirabilis (strain HI4320).